A 367-amino-acid chain; its full sequence is Alanine racemase (367 aa).

Catalysis depends on Lys40, which acts as the Proton acceptor; specific for D-alanine. Lys40 is modified (N6-(pyridoxal phosphate)lysine). Residue Arg136 coordinates substrate. Tyr263 (proton acceptor; specific for L-alanine) is an active-site residue. Met310 is a binding site for substrate.

Belongs to the alanine racemase family. Pyridoxal 5'-phosphate serves as cofactor.

It catalyses the reaction L-alanine = D-alanine. It participates in amino-acid biosynthesis; D-alanine biosynthesis; D-alanine from L-alanine: step 1/1. In terms of biological role, catalyzes the interconversion of L-alanine and D-alanine. May also act on other amino acids. This is Alanine racemase (alr) from Lactococcus lactis subsp. cremoris (strain MG1363).